The chain runs to 473 residues: Proline--tRNA ligase (473 aa).

This sequence belongs to the class-II aminoacyl-tRNA synthetase family. ProS type 3 subfamily. In terms of assembly, homodimer.

It localises to the cytoplasm. The catalysed reaction is tRNA(Pro) + L-proline + ATP = L-prolyl-tRNA(Pro) + AMP + diphosphate. Its function is as follows. Catalyzes the attachment of proline to tRNA(Pro) in a two-step reaction: proline is first activated by ATP to form Pro-AMP and then transferred to the acceptor end of tRNA(Pro). This Mesoplasma florum (strain ATCC 33453 / NBRC 100688 / NCTC 11704 / L1) (Acholeplasma florum) protein is Proline--tRNA ligase.